We begin with the raw amino-acid sequence, 590 residues long: Aspartate--tRNA ligase (590 aa).

Glutamate 174 is an L-aspartate binding site. Residues 198 to 201 (QLMK) are aspartate. Residue arginine 220 participates in L-aspartate binding. Residues 220–222 (RDE) and glutamine 229 contribute to the ATP site. Histidine 443 provides a ligand contact to L-aspartate. Glutamate 484 contacts ATP. Residue arginine 491 coordinates L-aspartate. ATP is bound at residue 536-539 (GLDR).

It belongs to the class-II aminoacyl-tRNA synthetase family. Type 1 subfamily. As to quaternary structure, homodimer.

It localises to the cytoplasm. The enzyme catalyses tRNA(Asp) + L-aspartate + ATP = L-aspartyl-tRNA(Asp) + AMP + diphosphate. Its function is as follows. Catalyzes the attachment of L-aspartate to tRNA(Asp) in a two-step reaction: L-aspartate is first activated by ATP to form Asp-AMP and then transferred to the acceptor end of tRNA(Asp). This is Aspartate--tRNA ligase from Lactococcus lactis subsp. cremoris (strain MG1363).